Here is a 195-residue protein sequence, read N- to C-terminus: Interferon tau-6 (195 aa).

The N-terminal stretch at 1 to 23 (MAFVLSLLMALVLVSYGPGGSLG) is a signal peptide. 2 disulfide bridges follow: cysteine 24–cysteine 122 and cysteine 52–cysteine 162. A glycan (N-linked (GlcNAc...) asparagine) is linked at asparagine 101.

It belongs to the alpha/beta interferon family. IFN-alphaII subfamily. In terms of tissue distribution, constitutively and exclusively expressed in the mononuclear cells of the extraembryonic trophectoderm.

It is found in the secreted. Functionally, paracrine hormone primarily responsible for maternal recognition of pregnancy. Interacts with endometrial receptors, probably type I interferon receptors, and blocks estrogen receptor expression, preventing the estrogen-induced increase in oxytocin receptor expression in the endometrium. This results in the suppression of the pulsatile endometrial release of the luteolytic hormone prostaglandin F2-alpha, hindering the regression of the corpus luteum (luteolysis) and therefore a return to ovarian cyclicity. This, and a possible direct effect of IFN-tau on prostaglandin synthesis, leads in turn to continued ovarian progesterone secretion, which stimulates the secretion by the endometrium of the nutrients required for the growth of the conceptus. In summary, displays particularly high antiviral and antiproliferative potency concurrently with particular weak cytotoxicity, high antiluteolytic activity and immunomodulatory properties. In contrast with other IFNs, IFN-tau is not virally inducible. The polypeptide is Interferon tau-6 (IFNT6) (Ovis aries (Sheep)).